Reading from the N-terminus, the 413-residue chain is Tryptophan synthase beta chain 2 (413 aa).

K107 is modified (N6-(pyridoxal phosphate)lysine).

The protein belongs to the TrpB family. As to quaternary structure, tetramer of two alpha and two beta chains. Pyridoxal 5'-phosphate is required as a cofactor.

The catalysed reaction is (1S,2R)-1-C-(indol-3-yl)glycerol 3-phosphate + L-serine = D-glyceraldehyde 3-phosphate + L-tryptophan + H2O. Its pathway is amino-acid biosynthesis; L-tryptophan biosynthesis; L-tryptophan from chorismate: step 5/5. Functionally, the beta subunit is responsible for the synthesis of L-tryptophan from indole and L-serine. The chain is Tryptophan synthase beta chain 2 (trpB2) from Nostoc sp. (strain PCC 7120 / SAG 25.82 / UTEX 2576).